The sequence spans 142 residues: Transcription antitermination protein NusB (142 aa).

Belongs to the NusB family.

Functionally, involved in transcription antitermination. Required for transcription of ribosomal RNA (rRNA) genes. Binds specifically to the boxA antiterminator sequence of the ribosomal RNA (rrn) operons. This is Transcription antitermination protein NusB from Thermotoga sp. (strain RQ2).